The following is a 139-amino-acid chain: Actin-depolymerizing factor 7 (139 aa).

The ADF-H domain occupies 7–139 (GMAVDDECKL…GLDVIRGRAN (133 aa)).

It belongs to the actin-binding proteins ADF family.

Functionally, actin-depolymerizing protein. Severs actin filaments (F-actin) and binds to actin monomers. This is Actin-depolymerizing factor 7 (ADF7) from Oryza sativa subsp. japonica (Rice).